Consider the following 425-residue polypeptide: Glucose-1-phosphate adenylyltransferase (425 aa).

Alpha-D-glucose 1-phosphate-binding positions include Y114, G179, 194–195 (EK), and S212.

This sequence belongs to the bacterial/plant glucose-1-phosphate adenylyltransferase family. As to quaternary structure, homotetramer.

It carries out the reaction alpha-D-glucose 1-phosphate + ATP + H(+) = ADP-alpha-D-glucose + diphosphate. Its pathway is glycan biosynthesis; glycogen biosynthesis. In terms of biological role, involved in the biosynthesis of ADP-glucose, a building block required for the elongation reactions to produce glycogen. Catalyzes the reaction between ATP and alpha-D-glucose 1-phosphate (G1P) to produce pyrophosphate and ADP-Glc. This chain is Glucose-1-phosphate adenylyltransferase, found in Pectobacterium carotovorum subsp. carotovorum (strain PC1).